A 957-amino-acid chain; its full sequence is Receptor-like protein 34 (957 aa).

The first 31 residues, 1–31 (MKGSWVVSTSIIRITLSFTFLFICHFSDVLA), serve as a signal peptide directing secretion. Over 32 to 910 (APTRHLCRPE…EEEDEDLISW (879 aa)) the chain is Extracellular. 7 N-linked (GlcNAc...) asparagine glycosylation sites follow: N78, N101, N114, N143, N167, N191, and N215. 18 LRR repeats span residues 120–143 (LHFL…SIEN), 144–167 (LSHL…SIGN), 168–192 (LSRL…IGNL), 194–216 (HLTF…IGNL), 217–240 (SHLT…IGGL), 241–264 (SNLT…IGNL), 266–287 (QLIV…SFGN), 288–312 (LNQL…LLNL), 313–336 (TGLS…ITSL), 338–360 (NLMA…LFII), 361–384 (PSLT…NISS), 386–409 (SNLQ…ISKL), 412–434 (LQEL…IFSH), 435–459 (LKSL…ILPY), 460–483 (FKTL…SVSS), 487–510 (SQSI…LRTQ), 511–534 (HELG…LWTL), and 535–557 (PNLF…TKPE). N-linked (GlcNAc...) asparagine glycans are attached at residues N242 and N263. N311 and N332 each carry an N-linked (GlcNAc...) asparagine glycan. N381 is a glycosylation site (N-linked (GlcNAc...) asparagine). N-linked (GlcNAc...) asparagine glycosylation occurs at N477. N-linked (GlcNAc...) asparagine glycans are attached at residues N541, N544, N569, N593, N608, and N618. An LRR 19; degenerate repeat occupies 558–580 (PSMAYLLGSNNNFTGKIPSFICE). LRR repeat units follow at residues 581–605 (LRSL…MENL), 606–630 (KSNL…IFES), 632–652 (RSLD…LRFF), 653–675 (SNLE…WLSS), 677–698 (QKLQ…QALF), 699–722 (PKLR…YFVE), 765–789 (LTIY…IGLL), 790–813 (KELH…IGNL), 815–837 (ALES…IGNL), and 839–862 (LLSY…QFLT). The N-linked (GlcNAc...) asparagine glycan is linked to N712. 4 N-linked (GlcNAc...) asparagine glycosylation sites follow: N796, N812, N836, and N844. Residues 911 to 931 (IAAAIGFGPGIAFGLMFGYIL) form a helical membrane-spanning segment. Over 932-957 (VSYKPEWFMNPFGRNNRRRKRHTTTH) the chain is Cytoplasmic.

It belongs to the RLP family.

The protein localises to the cell membrane. This chain is Receptor-like protein 34, found in Arabidopsis thaliana (Mouse-ear cress).